A 202-amino-acid polypeptide reads, in one-letter code: MAKVSVLNVAVLENPSPFHSPFRFEISFECSEALSDDLEWKIIYVGSAESEEFDQILDSVLVGPVPAGRHMFVFQADAPNPSLIPETDAVGVTVVLITCTYHGQEFIRVGYYVNNEYPDPELRENPPPKPDFSQLQRNILASNPRVTRFHINWDNNPDSLEAIENQDPNVDFSLSLSCTPVKSLGLPSCIPGLLPENSMDCI.

Residues 1-156 (MAKVSVLNVA…TRFHINWDNN (156 aa)) form an interaction with histone H3 and CHAF1B region. A Phosphoserine; by TLK2 modification is found at S198.

It belongs to the ASF1 family. As to quaternary structure, interacts with histone H3 (via C-terminus), including histone H3.1, H3.2 and H3.3, and histone H4; the interaction with H3 is direct. Interacts with the CHAF1A, CHAF1B and RBBP4 subunits of the CAF-1 complex. Interacts with HAT1, NASP and TAF1. Found in a soluble complex with NASP and histones H3 and H4; the interaction with NASP is probably indirect and mediated by H3-H4. Interacts with CDAN1. Found in a cytosolic complex with CDAN1, ASF1A, IPO4 and histones H3.1 and H4. Interacts with CREBBP. Phosphorylated by TLK2. Phosphorylated by TLK1. Highly expressed in germ cells. Restricted to premeiotic to meiotic stages during spermatogenesis.

It is found in the nucleus. The protein localises to the cytoplasm. Its subcellular location is the cytosol. In terms of biological role, histone chaperone that facilitates histone deposition and histone exchange and removal during nucleosome assembly and disassembly. Cooperates with chromatin assembly factor 1 (CAF-1) to promote replication-dependent chromatin assembly. Also involved in the nuclear import of the histone H3-H4 dimer together with importin-4 (IPO4): specifically recognizes and binds newly synthesized histones with the monomethylation of H3 'Lys-9' (H3K9me1) and diacetylation at 'Lys-5' and 'Lys-12' of H4 (H4K5ac and H4K12ac) marks in the cytosol. Does not participate in replication-independent nucleosome deposition which is mediated by ASF1A and HIRA. Required for gonad development. The chain is Histone chaperone ASF1B from Mus musculus (Mouse).